Consider the following 255-residue polypeptide: 5'-nucleotidase SurE (255 aa).

A divalent metal cation contacts are provided by aspartate 8, aspartate 9, serine 40, and asparagine 95.

This sequence belongs to the SurE nucleotidase family. Requires a divalent metal cation as cofactor.

Its subcellular location is the cytoplasm. It carries out the reaction a ribonucleoside 5'-phosphate + H2O = a ribonucleoside + phosphate. Functionally, nucleotidase that shows phosphatase activity on nucleoside 5'-monophosphates. The polypeptide is 5'-nucleotidase SurE (Solidesulfovibrio magneticus (strain ATCC 700980 / DSM 13731 / RS-1) (Desulfovibrio magneticus)).